We begin with the raw amino-acid sequence, 124 residues long: Transcription initiation factor TFIID subunit 13 (124 aa).

Residues 1-16 (MADEEEDPTFEEENEE) are compositionally biased toward acidic residues. The tract at residues 1 to 28 (MADEEEDPTFEEENEEIGGGAEGGQGKR) is disordered. The Histone-fold domain maps to 32–74 (FSKELRCMMYGFGDDQNPYTESVDILEDLVIEFITEMTHKAMS).

This sequence belongs to the TAF13 family. In terms of assembly, component of the TFIID basal transcription factor complex, composed of TATA-box-binding protein TBP, and a number of TBP-associated factors (TAFs), including TAF1, TAF2, TAF3, TAF4, TAF5, TAF6, TAF7, TAF8, TAF9, TAF10, TAF11, TAF12 and TAF13. Interacts with TBP, and more strongly with TAF10 and TAF11.

It is found in the nucleus. Its function is as follows. The TFIID basal transcription factor complex plays a major role in the initiation of RNA polymerase II (Pol II)-dependent transcription. TFIID recognizes and binds promoters via its subunit TBP, a TATA-box-binding protein, and promotes assembly of the pre-initiation complex (PIC). The TFIID complex consists of TBP and TBP-associated factors (TAFs), including TAF1, TAF2, TAF3, TAF4, TAF5, TAF6, TAF7, TAF8, TAF9, TAF10, TAF11, TAF12 and TAF13. TAF13, together with TAF11 and TBP, play key roles during promoter binding by the TFIID and TFIIA transcription factor complexes. The sequence is that of Transcription initiation factor TFIID subunit 13 from Bos taurus (Bovine).